A 167-amino-acid polypeptide reads, in one-letter code: Acetolactate synthase small subunit (167 aa).

In terms of domain architecture, ACT spans 7–81 (TLSVLVEAKP…NVIKIVELED (75 aa)).

This sequence belongs to the acetolactate synthase small subunit family. Dimer of large and small chains.

The catalysed reaction is 2 pyruvate + H(+) = (2S)-2-acetolactate + CO2. The protein operates within amino-acid biosynthesis; L-isoleucine biosynthesis; L-isoleucine from 2-oxobutanoate: step 1/4. Its pathway is amino-acid biosynthesis; L-valine biosynthesis; L-valine from pyruvate: step 1/4. The polypeptide is Acetolactate synthase small subunit (ilvH) (Mycobacterium avium).